The sequence spans 209 residues: Guanylate kinase (209 aa).

A Guanylate kinase-like domain is found at 7-185; the sequence is GNLYIVAAPS…AAMELQSIVI (179 aa). Residue 14–21 coordinates ATP; that stretch reads APSGGGKT.

This sequence belongs to the guanylate kinase family.

Its subcellular location is the cytoplasm. It carries out the reaction GMP + ATP = GDP + ADP. Functionally, essential for recycling GMP and indirectly, cGMP. This Legionella pneumophila (strain Lens) protein is Guanylate kinase.